A 278-amino-acid chain; its full sequence is Shikimate dehydrogenase (NADP(+)) (278 aa).

Residues 19-21 (SRS) and Thr-66 contribute to the shikimate site. Residue Lys-70 is the Proton acceptor of the active site. Residues Asn-91 and Asp-106 each coordinate shikimate. Residues 129–133 (GAGGA) and Phe-221 contribute to the NADP(+) site. Tyr-223 contacts shikimate. Gly-242 lines the NADP(+) pocket.

Belongs to the shikimate dehydrogenase family. Homodimer.

The enzyme catalyses shikimate + NADP(+) = 3-dehydroshikimate + NADPH + H(+). It functions in the pathway metabolic intermediate biosynthesis; chorismate biosynthesis; chorismate from D-erythrose 4-phosphate and phosphoenolpyruvate: step 4/7. Its function is as follows. Involved in the biosynthesis of the chorismate, which leads to the biosynthesis of aromatic amino acids. Catalyzes the reversible NADPH linked reduction of 3-dehydroshikimate (DHSA) to yield shikimate (SA). The sequence is that of Shikimate dehydrogenase (NADP(+)) from Anaeromyxobacter dehalogenans (strain 2CP-1 / ATCC BAA-258).